We begin with the raw amino-acid sequence, 314 residues long: tRNA dimethylallyltransferase (314 aa).

ATP is bound at residue 12 to 19 (GPTASGKT). 14–19 (TASGKT) contributes to the substrate binding site. Interaction with substrate tRNA stretches follow at residues 37-40 (DSAL) and 162-166 (QRIIR).

The protein belongs to the IPP transferase family. As to quaternary structure, monomer. The cofactor is Mg(2+).

It carries out the reaction adenosine(37) in tRNA + dimethylallyl diphosphate = N(6)-dimethylallyladenosine(37) in tRNA + diphosphate. In terms of biological role, catalyzes the transfer of a dimethylallyl group onto the adenine at position 37 in tRNAs that read codons beginning with uridine, leading to the formation of N6-(dimethylallyl)adenosine (i(6)A). The sequence is that of tRNA dimethylallyltransferase from Acinetobacter baumannii (strain SDF).